Consider the following 327-residue polypeptide: Biotin synthase (327 aa).

A Radical SAM core domain is found at 48–278 (YCGDGVGLCM…DRHITVCGGR (231 aa)). Residues cysteine 66, cysteine 70, and cysteine 73 each coordinate [4Fe-4S] cluster. [2Fe-2S] cluster contacts are provided by serine 143 and cysteine 203.

Belongs to the radical SAM superfamily. Biotin synthase family. In terms of assembly, homodimer. [4Fe-4S] cluster serves as cofactor. Requires [2Fe-2S] cluster as cofactor.

The catalysed reaction is (4R,5S)-dethiobiotin + (sulfur carrier)-SH + 2 reduced [2Fe-2S]-[ferredoxin] + 2 S-adenosyl-L-methionine = (sulfur carrier)-H + biotin + 2 5'-deoxyadenosine + 2 L-methionine + 2 oxidized [2Fe-2S]-[ferredoxin]. It functions in the pathway cofactor biosynthesis; biotin biosynthesis; biotin from 7,8-diaminononanoate: step 2/2. Functionally, catalyzes the conversion of dethiobiotin (DTB) to biotin by the insertion of a sulfur atom into dethiobiotin via a radical-based mechanism. The polypeptide is Biotin synthase (Syntrophotalea carbinolica (strain DSM 2380 / NBRC 103641 / GraBd1) (Pelobacter carbinolicus)).